The chain runs to 503 residues: ATP synthase subunit alpha (503 aa).

Residue 169–176 (GDRSTGKT) coordinates ATP.

Belongs to the ATPase alpha/beta chains family. In terms of assembly, F-type ATPases have 2 components, CF(1) - the catalytic core - and CF(0) - the membrane proton channel. CF(1) has five subunits: alpha(3), beta(3), gamma(1), delta(1), epsilon(1). CF(0) has three main subunits: a(1), b(2) and c(9-12). The alpha and beta chains form an alternating ring which encloses part of the gamma chain. CF(1) is attached to CF(0) by a central stalk formed by the gamma and epsilon chains, while a peripheral stalk is formed by the delta and b chains.

It is found in the cell membrane. The enzyme catalyses ATP + H2O + 4 H(+)(in) = ADP + phosphate + 5 H(+)(out). Functionally, produces ATP from ADP in the presence of a proton gradient across the membrane. The alpha chain is a regulatory subunit. This is ATP synthase subunit alpha from Dehalococcoides mccartyi (strain ATCC BAA-2266 / KCTC 15142 / 195) (Dehalococcoides ethenogenes (strain 195)).